Reading from the N-terminus, the 429-residue chain is Enolase (429 aa).

Gln-167 contacts (2R)-2-phosphoglycerate. Glu-209 functions as the Proton donor in the catalytic mechanism. 3 residues coordinate Mg(2+): Asp-246, Glu-289, and Asp-316. Residues Lys-341, Arg-370, Ser-371, and Lys-392 each coordinate (2R)-2-phosphoglycerate. Lys-341 serves as the catalytic Proton acceptor.

This sequence belongs to the enolase family. Component of the RNA degradosome, a multiprotein complex involved in RNA processing and mRNA degradation. Requires Mg(2+) as cofactor.

It localises to the cytoplasm. The protein localises to the secreted. The protein resides in the cell surface. The enzyme catalyses (2R)-2-phosphoglycerate = phosphoenolpyruvate + H2O. Its pathway is carbohydrate degradation; glycolysis; pyruvate from D-glyceraldehyde 3-phosphate: step 4/5. Catalyzes the reversible conversion of 2-phosphoglycerate (2-PG) into phosphoenolpyruvate (PEP). It is essential for the degradation of carbohydrates via glycolysis. The protein is Enolase of Pseudomonas fluorescens (strain ATCC BAA-477 / NRRL B-23932 / Pf-5).